A 359-amino-acid chain; its full sequence is Leafy/floricaula homolog FL1 (359 aa).

The disordered stretch occupies residues 113 to 170 (SEEQVVQHSEKDQLGRAGSGDTAGTSWGAQQQRKKHRHRHHITAMKGAATEEDEEDEE). Basic residues predominate over residues 144 to 155 (QRKKHRHRHHIT). 3 consecutive DNA-binding regions follow at residues 179–183 (REHPF), 248–255 (NKPKMRHY), and 320–323 (YVPT). Positions 340-352 (ASSASTSTSAPTA) are enriched in low complexity. Residues 340–359 (ASSASTSTSAPTAHHLELPY) are disordered.

The protein belongs to the FLO/LFY family. As to expression, expressed strongly in the early floral primordium and then successively in the primordia of sepals, petals, stamens and carpels. Also in the leaf primordia and young leaves.

It is found in the nucleus. Functionally, probable transcription factor. The protein is Leafy/floricaula homolog FL1 (LF1) of Eucalyptus globulus (Tasmanian blue gum).